Here is a 436-residue protein sequence, read N- to C-terminus: Trigger factor (436 aa).

A PPIase FKBP-type domain is found at 161 to 255; sequence DDVAIIDFKT…VKEVREKQLP (95 aa).

The protein belongs to the FKBP-type PPIase family. Tig subfamily.

The protein resides in the cytoplasm. The catalysed reaction is [protein]-peptidylproline (omega=180) = [protein]-peptidylproline (omega=0). Functionally, involved in protein export. Acts as a chaperone by maintaining the newly synthesized protein in an open conformation. Functions as a peptidyl-prolyl cis-trans isomerase. This Akkermansia muciniphila (strain ATCC BAA-835 / DSM 22959 / JCM 33894 / BCRC 81048 / CCUG 64013 / CIP 107961 / Muc) protein is Trigger factor.